A 300-amino-acid polypeptide reads, in one-letter code: Tyrosine recombinase XerC (300 aa).

The 87-residue stretch at 2–88 (IQEGKLEQQF…SLRSFYTFLL (87 aa)) folds into the Core-binding (CB) domain. One can recognise a Tyr recombinase domain in the interval 109 to 294 (RLPKFFYSEE…TKEHLKSTYM (186 aa)). Catalysis depends on residues arginine 150, lysine 174, histidine 246, arginine 249, and histidine 272. The active-site O-(3'-phospho-DNA)-tyrosine intermediate is the tyrosine 281.

The protein belongs to the 'phage' integrase family. XerC subfamily. In terms of assembly, forms a cyclic heterotetrameric complex composed of two molecules of XerC and two molecules of XerD.

It localises to the cytoplasm. Its function is as follows. Site-specific tyrosine recombinase, which acts by catalyzing the cutting and rejoining of the recombining DNA molecules. The XerC-XerD complex is essential to convert dimers of the bacterial chromosome into monomers to permit their segregation at cell division. It also contributes to the segregational stability of plasmids. The chain is Tyrosine recombinase XerC from Listeria monocytogenes serotype 4b (strain F2365).